A 288-amino-acid polypeptide reads, in one-letter code: Transmembrane protein 163 (288 aa).

Residues 1–11 (MERAPGSERRS) are compositionally biased toward basic and acidic residues. Residues 1-64 (MERAPGSERR…ESGQFSDGFE (64 aa)) are disordered. Residues 1–87 (MERAPGSERR…HEAQNYRKKA (87 aa)) are Cytoplasmic-facing. Phosphoserine is present on serine 11. The segment covering 12–24 (PPGPGVPRPPPRG) has biased composition (pro residues). Over residues 25–42 (HAPSTAAPAPNPAPLSSS) the composition is skewed to low complexity. Residues 41-71 (SSMQPDEERQPRISESGQFSDGFEDRGLLES) form a required for interaction with MCOLN1 region. Serine 54, serine 56, and serine 60 each carry phosphoserine. Residues 88 to 108 (LWVSWLSIIVTLALAVAAFTV) form a helical membrane-spanning segment. At 109–115 (SVMRYSA) the chain is on the extracellular side. The chain crosses the membrane as a helical span at residues 116–136 (SAFGFAFDAILDVLSSAIVLW). Residues 137–149 (RYSNAAAVHSAHR) lie on the Cytoplasmic side of the membrane. Residues 150 to 170 (EYIACVILGVIFLLSSICIVV) traverse the membrane as a helical segment. Residues 171-186 (KAIHDLSTRLLPEVDD) are Extracellular-facing. Residues 187–207 (FLFSVSILSGILCSVLAVLKF) form a helical membrane-spanning segment. Residues 208-216 (MLGKVLTSR) lie on the Cytoplasmic side of the membrane. The chain crosses the membrane as a helical span at residues 217–237 (ALITDGFNSLVGGVMGFSILL). Topologically, residues 238–254 (SAEVFKHNAAVWYLDGS) are extracellular. A helical membrane pass occupies residues 255 to 275 (IGVLIGLTIFAYGVKLLIDMV). Residues 276-288 (PRVRQTRHYEMFE) are Cytoplasmic-facing.

This sequence belongs to the TMEM163 family. Homodimer. Interacts with MCOLN1. Interacts with SLC30A1, SLC30A2, SLC30A3 and SLC30A4. Strongly expressed in brain. Also detected in lung, liver, kidney and spleen. Mainly expressed in the glutaminergic neuron subpopulations.

The protein localises to the cytoplasmic vesicle. It localises to the secretory vesicle. Its subcellular location is the synaptic vesicle membrane. It is found in the early endosome membrane. The protein resides in the late endosome membrane. The protein localises to the lysosome membrane. It localises to the cell membrane. It carries out the reaction Zn(2+)(in) = Zn(2+)(out). Functionally, zinc ion transporter that mediates zinc efflux and plays a crucial role in intracellular zinc homeostasis. Binds the divalent cations Zn(2+), Ni(2+), and to a minor extent Cu(2+). Is a functional modulator of P2X purinoceptors, including P2RX1, P2RX3, P2RX4 and P2RX7. Plays a role in central nervous system development and is required for myelination, and survival and proliferation of oligodendrocytes. This chain is Transmembrane protein 163 (Tmem163), found in Rattus norvegicus (Rat).